Here is a 127-residue protein sequence, read N- to C-terminus: Secreted RxLR effector protein 7 (127 aa).

Residues 1–21 form the signal peptide; it reads MRSAYYVLTALLVVASSQVAA. Residues 48–65 carry the RxLR-dEER motif; that stretch reads RFLRESRDVHGNVANEER.

Belongs to the RxLR effector family.

Its subcellular location is the secreted. The protein localises to the host nucleus. It localises to the host cytoplasm. Functionally, secreted effector that completely suppresses the host cell death induced by cell death-inducing proteins. The sequence is that of Secreted RxLR effector protein 7 from Plasmopara viticola (Downy mildew of grapevine).